Reading from the N-terminus, the 484-residue chain is Notoamide biosynthesis transcriptional activator notL (484 aa).

The zn(2)-C6 fungal-type DNA-binding region spans 33–60; it reads CQSCATSKIKCPKEKTSCSKCQARGIEC. 2 disordered regions span residues 70–154 and 363–387; these read RRRE…NNSV and GGGESDTGQRPATSMIPNGKDQMRP. The span at 76–122 shows a compositional bias: low complexity; it reads TGHPTSCTSTSTTANSSSSSSRSSNSSSSSSTSPPSSSSSLSSNPEP. Basic and acidic residues predominate over residues 123–133; it reads TSDKDLPRPRS. Polar residues-rich tracts occupy residues 139–154 and 368–378; these read ANSTEPSILPPANNSV and DTGQRPATSMI.

It localises to the nucleus. Transcription factor that probably regulates the expression of the gene cluster that mediates the biosynthesis of notoamide, a fungal indole alkaloid that belongs to a family of natural products containing a characteristic bicyclo[2.2.2]diazaoctane core. In Aspergillus sp. (strain MF297-2), this protein is Notoamide biosynthesis transcriptional activator notL.